The following is a 322-amino-acid chain: DNA primase small subunit PriS (322 aa).

Residues Asp100, Asp102, and Asp228 contribute to the active site.

Belongs to the eukaryotic-type primase small subunit family. Heterodimer of a small subunit (PriS) and a large subunit (PriL). It depends on Mg(2+) as a cofactor. Mn(2+) serves as cofactor.

Its function is as follows. Catalytic subunit of DNA primase, an RNA polymerase that catalyzes the synthesis of short RNA molecules used as primers for DNA polymerase during DNA replication. The small subunit contains the primase catalytic core and has DNA synthesis activity on its own. Binding to the large subunit stabilizes and modulates the activity, increasing the rate of DNA synthesis while decreasing the length of the DNA fragments, and conferring RNA synthesis capability. The DNA polymerase activity may enable DNA primase to also catalyze primer extension after primer synthesis. May also play a role in DNA repair. The chain is DNA primase small subunit PriS from Sulfolobus acidocaldarius (strain ATCC 33909 / DSM 639 / JCM 8929 / NBRC 15157 / NCIMB 11770).